The following is a 245-amino-acid chain: 1-(5-phosphoribosyl)-5-[(5-phosphoribosylamino)methylideneamino] imidazole-4-carboxamide isomerase (245 aa).

Catalysis depends on aspartate 7, which acts as the Proton acceptor. Catalysis depends on aspartate 129, which acts as the Proton donor.

This sequence belongs to the HisA/HisF family.

The protein localises to the cytoplasm. The catalysed reaction is 1-(5-phospho-beta-D-ribosyl)-5-[(5-phospho-beta-D-ribosylamino)methylideneamino]imidazole-4-carboxamide = 5-[(5-phospho-1-deoxy-D-ribulos-1-ylimino)methylamino]-1-(5-phospho-beta-D-ribosyl)imidazole-4-carboxamide. The protein operates within amino-acid biosynthesis; L-histidine biosynthesis; L-histidine from 5-phospho-alpha-D-ribose 1-diphosphate: step 4/9. This chain is 1-(5-phosphoribosyl)-5-[(5-phosphoribosylamino)methylideneamino] imidazole-4-carboxamide isomerase, found in Shewanella sp. (strain MR-4).